We begin with the raw amino-acid sequence, 83 residues long: Putative membrane protein insertion efficiency factor (83 aa).

A disordered region spans residues 63 to 83; the sequence is GGNDPVPDHFSLRRNKTDISD. Positions 68–83 are enriched in basic and acidic residues; sequence VPDHFSLRRNKTDISD.

Belongs to the UPF0161 family.

The protein resides in the cell membrane. Functionally, could be involved in insertion of integral membrane proteins into the membrane. The polypeptide is Putative membrane protein insertion efficiency factor (Streptococcus agalactiae serotype Ia (strain ATCC 27591 / A909 / CDC SS700)).